A 1036-amino-acid chain; its full sequence is Exportin-T (1036 aa).

It belongs to the exportin family.

It is found in the nucleus. It localises to the cytoplasm. Its function is as follows. tRNA nucleus export receptor which facilitates tRNA translocation across the nuclear pore complex. Involved in pre-tRNA splicing, probably by affecting the interaction of pre-tRNA with splicing endonuclease. This chain is Exportin-T (LOS1), found in Phaeosphaeria nodorum (strain SN15 / ATCC MYA-4574 / FGSC 10173) (Glume blotch fungus).